A 497-amino-acid polypeptide reads, in one-letter code: GDP-fucose protein O-fucosyltransferase 4 (497 aa).

Topologically, residues 1–6 (MACRRR) are cytoplasmic. Residues 7–27 (LLPCAGLGLFGVLCWVWVSFA) form a helical; Signal-anchor for type II membrane protein membrane-spanning segment. Topologically, residues 28–497 (SFPDDQLPLE…ITERRARGKH (470 aa)) are lumenal. N-linked (GlcNAc...) asparagine glycosylation is present at Asn-169. A disulfide bond links Cys-392 and Cys-395. The tract at residues 406–427 (RAHRKDPERNPPPLPKMASNSH) is disordered. The N-linked (GlcNAc...) asparagine glycan is linked to Asn-474.

The protein belongs to the glycosyltransferase 10 family.

It localises to the endoplasmic reticulum membrane. The enzyme catalyses L-threonyl-[protein] + GDP-beta-L-fucose = 3-O-(alpha-L-fucosyl)-L-threonyl-[protein] + GDP + H(+). It carries out the reaction L-seryl-[protein] + GDP-beta-L-fucose = 3-O-(alpha-L-fucosyl)-L-seryl-[protein] + GDP + H(+). Its pathway is protein modification; protein glycosylation. Protein O-fucosyltransferase that specifically catalyzes O-fucosylation of serine or threonine residues in EMI domains of target proteins. Attaches fucose through an O-glycosidic linkage. O-fucosylation of EMI domain-containing proteins may be required for facilitating protein folding and secretion. This is GDP-fucose protein O-fucosyltransferase 4 (fut11) from Oryzias latipes (Japanese rice fish).